Consider the following 380-residue polypeptide: Cytochrome b (380 aa).

4 helical membrane-spanning segments follow: residues 33 to 53 (FGSL…FLAM), 77 to 98 (WLIR…FIHV), 113 to 133 (WNIG…GYVL), and 178 to 198 (FFAF…VHLL). Positions 83 and 97 each coordinate heme b. Heme b contacts are provided by histidine 182 and histidine 196. An a ubiquinone-binding site is contributed by histidine 201. The next 4 helical transmembrane spans lie at 226-246 (IKDL…VLFF), 288-308 (LGGV…PLLN), 320-340 (LTQF…WIGG), and 347-367 (FTTI…VLMP).

It belongs to the cytochrome b family. The cytochrome bc1 complex contains 11 subunits: 3 respiratory subunits (MT-CYB, CYC1 and UQCRFS1), 2 core proteins (UQCRC1 and UQCRC2) and 6 low-molecular weight proteins (UQCRH/QCR6, UQCRB/QCR7, UQCRQ/QCR8, UQCR10/QCR9, UQCR11/QCR10 and a cleavage product of UQCRFS1). This cytochrome bc1 complex then forms a dimer. It depends on heme b as a cofactor.

It is found in the mitochondrion inner membrane. Functionally, component of the ubiquinol-cytochrome c reductase complex (complex III or cytochrome b-c1 complex) that is part of the mitochondrial respiratory chain. The b-c1 complex mediates electron transfer from ubiquinol to cytochrome c. Contributes to the generation of a proton gradient across the mitochondrial membrane that is then used for ATP synthesis. The polypeptide is Cytochrome b (MT-CYB) (Thomasomys notatus (Distinguished oldfield mouse)).